Here is a 459-residue protein sequence, read N- to C-terminus: Cysteine--tRNA ligase (459 aa).

Zn(2+) is bound at residue Cys-28. A 'HIGH' region motif is present at residues 30 to 40; sequence VTIYDLCHIGH. 3 residues coordinate Zn(2+): Cys-209, His-234, and Glu-238. Positions 266 to 270 match the 'KMSKS' region motif; that stretch reads KMSKS. Residue Lys-269 coordinates ATP.

This sequence belongs to the class-I aminoacyl-tRNA synthetase family. As to quaternary structure, monomer. It depends on Zn(2+) as a cofactor.

The protein localises to the cytoplasm. It carries out the reaction tRNA(Cys) + L-cysteine + ATP = L-cysteinyl-tRNA(Cys) + AMP + diphosphate. This Shewanella amazonensis (strain ATCC BAA-1098 / SB2B) protein is Cysteine--tRNA ligase.